The primary structure comprises 55 residues: Large ribosomal subunit protein bL33 (55 aa).

This sequence belongs to the bacterial ribosomal protein bL33 family.

The sequence is that of Large ribosomal subunit protein bL33 from Rhizobium meliloti (strain 1021) (Ensifer meliloti).